The chain runs to 360 residues: Phosphoserine aminotransferase (360 aa).

L-glutamate is bound at residue R42. Residues 76–77 (AS), W102, T152, D172, and Q195 contribute to the pyridoxal 5'-phosphate site. K196 bears the N6-(pyridoxal phosphate)lysine mark. 237–238 (NT) lines the pyridoxal 5'-phosphate pocket.

It belongs to the class-V pyridoxal-phosphate-dependent aminotransferase family. SerC subfamily. As to quaternary structure, homodimer. Pyridoxal 5'-phosphate serves as cofactor.

It localises to the cytoplasm. It catalyses the reaction O-phospho-L-serine + 2-oxoglutarate = 3-phosphooxypyruvate + L-glutamate. The enzyme catalyses 4-(phosphooxy)-L-threonine + 2-oxoglutarate = (R)-3-hydroxy-2-oxo-4-phosphooxybutanoate + L-glutamate. It functions in the pathway amino-acid biosynthesis; L-serine biosynthesis; L-serine from 3-phospho-D-glycerate: step 2/3. Functionally, catalyzes the reversible conversion of 3-phosphohydroxypyruvate to phosphoserine and of 3-hydroxy-2-oxo-4-phosphonooxybutanoate to phosphohydroxythreonine. The chain is Phosphoserine aminotransferase from Bacillus thuringiensis subsp. konkukian (strain 97-27).